The chain runs to 837 residues: Leucine-zipper-like transcriptional regulator 1 (837 aa).

Ala-2 bears the N-acetylalanine mark. 6 Kelch repeats span residues 76–125 (AIYV…VYGS), 127–182 (MFVF…VYSD), 184–235 (LWIF…VCRD), 236–282 (KMFV…QRRY), 292–338 (HLYV…PERA), and 396–447 (AMYI…FVLG). The disordered stretch occupies residues 324-352 (SSDSEVGGAEMPERASSSEDASTLTSEER). 2 consecutive BTB domains span residues 440 to 534 (CDVE…KYPR) and 664 to 733 (CDIT…NMPP).

Belongs to the LZTR1 family. In terms of assembly, homodimer. Component of the BCR(LZTR1) E3 ubiquitin ligase complex, at least composed of CUL3, LZTR1 and RBX1. Interacts with Ras (K-Ras/KRAS, N-Ras/NRAS and H-Ras/HRAS). Interacts with RAF1. Interacts with SHOC2. Interacts with PPP1CB. In terms of processing, phosphorylated on tyrosine upon induction of apoptosis, leading to its degradation by the proteasome. As to expression, widely expressed.

Its subcellular location is the endomembrane system. The protein localises to the recycling endosome. The protein resides in the golgi apparatus. It functions in the pathway protein modification; protein ubiquitination. Functionally, substrate-specific adapter of a BCR (BTB-CUL3-RBX1) E3 ubiquitin-protein ligase complex that mediates ubiquitination of Ras (K-Ras/KRAS, N-Ras/NRAS and H-Ras/HRAS). Is a negative regulator of RAS-MAPK signaling that acts by controlling Ras levels and decreasing Ras association with membranes. This is Leucine-zipper-like transcriptional regulator 1 from Mus musculus (Mouse).